The primary structure comprises 366 residues: Capsular polysaccharide phosphotransferase LcbA (366 aa).

Belongs to the stealth family.

The chain is Capsular polysaccharide phosphotransferase LcbA (lcbA) from Neisseria meningitidis.